Reading from the N-terminus, the 134-residue chain is D-dopachrome decarboxylase-like protein (134 aa).

The protein belongs to the MIF family.

Its subcellular location is the cytoplasm. Functionally, may have lyase activity. This chain is D-dopachrome decarboxylase-like protein (DDTL), found in Homo sapiens (Human).